Here is a 69-residue protein sequence, read N- to C-terminus: Small, acid-soluble spore protein I (69 aa).

The protein belongs to the SspI family.

Its subcellular location is the spore core. This chain is Small, acid-soluble spore protein I, found in Bacillus cereus (strain G9842).